A 160-amino-acid polypeptide reads, in one-letter code: Transcriptional regulator MraZ (160 aa).

SpoVT-AbrB domains follow at residues 5–50 (KFDT…GDQV) and 93–136 (AVEC…SQAV).

This sequence belongs to the MraZ family. Forms oligomers.

It is found in the cytoplasm. Its subcellular location is the nucleoid. The sequence is that of Transcriptional regulator MraZ from Geobacter sp. (strain M21).